Consider the following 676-residue polypeptide: DNA ligase (676 aa).

Residues 41-45 (DLTYD), 90-91 (SL), and E123 contribute to the NAD(+) site. The active-site N6-AMP-lysine intermediate is K125. Residues R146, E180, K293, and K317 each contribute to the NAD(+) site. The Zn(2+) site is built by C408, C411, C424, and C429.

Belongs to the NAD-dependent DNA ligase family. LigA subfamily. The cofactor is Mg(2+). Requires Mn(2+) as cofactor.

It catalyses the reaction NAD(+) + (deoxyribonucleotide)n-3'-hydroxyl + 5'-phospho-(deoxyribonucleotide)m = (deoxyribonucleotide)n+m + AMP + beta-nicotinamide D-nucleotide.. Its function is as follows. DNA ligase that catalyzes the formation of phosphodiester linkages between 5'-phosphoryl and 3'-hydroxyl groups in double-stranded DNA using NAD as a coenzyme and as the energy source for the reaction. It is essential for DNA replication and repair of damaged DNA. The polypeptide is DNA ligase (Borrelia turicatae (strain 91E135)).